Here is a 400-residue protein sequence, read N- to C-terminus: Multidrug resistance protein MdtH (400 aa).

Topologically, residues 1–12 are cytoplasmic; that stretch reads MSRVSQARNLGK. The helical transmembrane segment at 13-33 threads the bilayer; it reads YFLLIDNMLVVLGFFVVFPLI. The Periplasmic segment spans residues 34-98; sequence SIRFVDQMGW…GFATMGIAHE (65 aa). The chain crosses the membrane as a helical span at residues 99–116; the sequence is PWLLWFSCLLSGLGGTLF. At 117 to 138 the chain is on the cytoplasmic side; it reads DPPRSALVVKLIRPQQRGRFFS. Residues 139–159 traverse the membrane as a helical segment; it reads LLMMQDSAGAVIGALLGSWLL. The Periplasmic segment spans residues 160 to 164; that stretch reads QYDFR. The helical transmembrane segment at 165 to 185 threads the bilayer; it reads LVCATGAVLFVLCAAFNAWLL. The Cytoplasmic portion of the chain corresponds to 186-213; it reads PAWKLSTVRTPVREGMTRVMRDKRFVTY. A helical membrane pass occupies residues 214–232; it reads VLTLAGYYMLAVQVMLPIM. At 233-241 the chain is on the periplasmic side; it reads VNDVAGAPS. A helical transmembrane segment spans residues 242–262; it reads AVKWMYAIEACLSLTLLYPIA. At 263-274 the chain is on the cytoplasmic side; sequence RWSEKHFRLEHR. The chain crosses the membrane as a helical span at residues 275–295; sequence LMAGLLIMSLSMMPVGMVSGL. Topologically, residues 296-297 are periplasmic; sequence QQ. The chain crosses the membrane as a helical span at residues 298–318; sequence LFTLICLFYIGSIIAEPARET. The Cytoplasmic portion of the chain corresponds to 319 to 337; it reads LSASLADARARGSYMGFSR. The helical transmembrane segment at 338–358 threads the bilayer; that stretch reads LGLAIGGAIGYIGGGWLFDLG. Over 359 to 365 the chain is Periplasmic; it reads KSAHQPE. The helical transmembrane segment at 366 to 386 threads the bilayer; that stretch reads LPWMMLGIIGIFTFLALGWQF. At 387 to 400 the chain is on the cytoplasmic side; the sequence is SQKRAARRLLERDA.

This sequence belongs to the major facilitator superfamily. DHA1 family. MdtH (TC 2.A.1.2.21) subfamily.

The protein resides in the cell inner membrane. In Shigella boydii serotype 4 (strain Sb227), this protein is Multidrug resistance protein MdtH.